Reading from the N-terminus, the 435-residue chain is Homoserine dehydrogenase (435 aa).

NADPH-binding residues include threonine 13, valine 14, arginine 43, and lysine 105. Valine 14 lines the NAD(+) pocket. NADP(+)-binding residues include valine 14, arginine 43, and lysine 105. Residues glutamate 129, valine 132, glycine 134, and isoleucine 136 each coordinate Na(+). Lysine 204 (proton donor) is an active-site residue. 2 disordered regions span residues 255–274 and 377–402; these read ARGV…TPDR and RCDD…PDHV. Basic and acidic residues-rich tracts occupy residues 262–274 and 377–391; these read RAPD…TPDR and RCDD…AERR.

The protein belongs to the homoserine dehydrogenase family. It depends on a metal cation as a cofactor.

It catalyses the reaction L-homoserine + NADP(+) = L-aspartate 4-semialdehyde + NADPH + H(+). The enzyme catalyses L-homoserine + NAD(+) = L-aspartate 4-semialdehyde + NADH + H(+). It functions in the pathway amino-acid biosynthesis; L-methionine biosynthesis via de novo pathway; L-homoserine from L-aspartate: step 3/3. It participates in amino-acid biosynthesis; L-threonine biosynthesis; L-threonine from L-aspartate: step 3/5. Its function is as follows. Catalyzes the conversion of L-aspartate-beta-semialdehyde (L-Asa) to L-homoserine (L-Hse), the third step in the biosynthesis of threonine and methionine from aspartate. This is Homoserine dehydrogenase (hom) from Methylobacillus glycogenes.